Reading from the N-terminus, the 400-residue chain is Tryptophan synthase beta chain (400 aa).

Residue lysine 91 is modified to N6-(pyridoxal phosphate)lysine.

Belongs to the TrpB family. As to quaternary structure, tetramer of two alpha and two beta chains. It depends on pyridoxal 5'-phosphate as a cofactor.

It catalyses the reaction (1S,2R)-1-C-(indol-3-yl)glycerol 3-phosphate + L-serine = D-glyceraldehyde 3-phosphate + L-tryptophan + H2O. It participates in amino-acid biosynthesis; L-tryptophan biosynthesis; L-tryptophan from chorismate: step 5/5. Its function is as follows. The beta subunit is responsible for the synthesis of L-tryptophan from indole and L-serine. The polypeptide is Tryptophan synthase beta chain (Listeria monocytogenes serotype 4a (strain HCC23)).